The primary structure comprises 357 residues: tRNA/tmRNA (uracil-C(5))-methyltransferase (357 aa).

The S-adenosyl-L-methionine site is built by Gln-180, Tyr-209, Asn-214, Glu-230, and Asp-290. The Nucleophile role is filled by Cys-315. Glu-349 (proton acceptor) is an active-site residue.

The protein belongs to the class I-like SAM-binding methyltransferase superfamily. RNA M5U methyltransferase family. TrmA subfamily.

It carries out the reaction uridine(54) in tRNA + S-adenosyl-L-methionine = 5-methyluridine(54) in tRNA + S-adenosyl-L-homocysteine + H(+). It catalyses the reaction uridine(341) in tmRNA + S-adenosyl-L-methionine = 5-methyluridine(341) in tmRNA + S-adenosyl-L-homocysteine + H(+). Functionally, dual-specificity methyltransferase that catalyzes the formation of 5-methyluridine at position 54 (m5U54) in all tRNAs, and that of position 341 (m5U341) in tmRNA (transfer-mRNA). This chain is tRNA/tmRNA (uracil-C(5))-methyltransferase, found in Campylobacter jejuni subsp. jejuni serotype O:23/36 (strain 81-176).